Reading from the N-terminus, the 580-residue chain is DBIRD complex subunit ZNF326 (580 aa).

The tract at residues 1 to 124 is mediates transcriptional activation; sequence MDFEDDYVHS…YRNSLDSFGG (124 aa). Residues Ser48, Ser56, Ser63, Ser69, Ser81, Ser82, Ser91, Ser106, Ser114, Ser118, Ser121, and Ser137 each carry the phosphoserine modification. Lys140 participates in a covalent cross-link: Glycyl lysine isopeptide (Lys-Gly) (interchain with G-Cter in SUMO2). The tract at residues 156–196 is disordered; sequence SYSSFSSPHMKPAPVGSRGRGTPAYPESTFGSRSYDAFGGP. Arg173 is subject to Omega-N-methylarginine. Ser212 is subject to Phosphoserine. Arg235 carries the omega-N-methylarginine modification. A Bipartite nuclear localization signal motif is present at residues 238 to 260; the sequence is KRKMMQIFIKPGGAFIKKPKLAK. Residue Lys240 forms a Glycyl lysine isopeptide (Lys-Gly) (interchain with G-Cter in SUMO2) linkage. Lys247 carries the post-translational modification N6-acetyllysine; alternate. Residue Lys247 forms a Glycyl lysine isopeptide (Lys-Gly) (interchain with G-Cter in SUMO2); alternate linkage. Glycyl lysine isopeptide (Lys-Gly) (interchain with G-Cter in SUMO2) cross-links involve residues Lys254 and Lys264. Positions 256 to 302 are disordered; the sequence is PKLAKPMDKMNLSKSPTKTDPKNEEEEKRRIEARREKQRRRREKNSE. Ser270 carries the phosphoserine modification. Residues 272–290 show a composition bias toward basic and acidic residues; that stretch reads TKTDPKNEEEEKRRIEARR. Residues 314–336 form a C2H2 AKAP95-type 1 zinc finger; sequence CSFCKFRTFEEKDIELHLESSSH. Lys401 participates in a covalent cross-link: Glycyl lysine isopeptide (Lys-Gly) (interchain with G-Cter in SUMO2). Residues 407–430 form a C2H2 AKAP95-type 2 zinc finger; that stretch reads CSACSVYIPALHSSVQLHLKSPDH. Glycyl lysine isopeptide (Lys-Gly) (interchain with G-Cter in SUMO2) cross-links involve residues Lys459 and Lys467. A disordered region spans residues 470–580; that stretch reads NPFEIQDHPQ…ATEQCEHRQM (111 aa). Residues 483-529 show a composition bias toward acidic residues; that stretch reads IEGDEEDEEKIDEPIEEEEEEEEEEEEEGEEAGSVEEEGDVEGEEGT. The segment covering 530 to 539 has biased composition (low complexity); it reads AEAAAAGEAD. Acidic residues predominate over residues 540 to 562; it reads AVGEAEGAGEAEEAEEEEEEEGT.

This sequence belongs to the AKAP95 family. Component of the DBIRD complex. Interacts with CCAR2; the interaction is direct. Ubiquitously expressed in adult tissues. Highly expressed in neuronal tissues such as brain and neural tube.

The protein resides in the nucleus matrix. Its function is as follows. Core component of the DBIRD complex, a multiprotein complex that acts at the interface between core mRNP particles and RNA polymerase II (RNAPII) and integrates transcript elongation with the regulation of alternative splicing: the DBIRD complex affects local transcript elongation rates and alternative splicing of a large set of exons embedded in (A + T)-rich DNA regions. May also play a role in neuronal differentiation. Able to bind DNA and activate expression in vitro. In Mus musculus (Mouse), this protein is DBIRD complex subunit ZNF326 (Znf326).